The sequence spans 797 residues: Ribosome biogenesis protein BOP1 homolog (797 aa).

Disordered stretches follow at residues 22–112 (LVPS…GGGP) and 149–177 (SICANTKPRAGPDPGSDSSEDERPNRNTV). The segment covering 61 to 73 (AGAAAAAVEGTAA) has biased composition (low complexity). The span at 74–87 (PEDEAADNSSEEDA) shows a compositional bias: acidic residues. The span at 90-112 (GSHGEGAGEGGGSGTWPGNGGGP) shows a compositional bias: gly residues. 7 WD repeats span residues 462 to 502 (GHMG…CWRT), 504 to 544 (VLEG…EEAE), 581 to 623 (RLRF…SQNP), 626 to 664 (KNRGRVVRVAFHPTKPFFFVATQNHVRVYNLAKQALAKK), 667 to 706 (GGGGVLSCLALHPGGDHVLVGSDDKRVAWYDLDLSTKPYK), 710 to 749 (YHSAPPRAVAFHRSYPLFASAADDGTVQVFHGMVYADLLT), and 766 to 797 (TASEGVADCAFHPTQPWIFTAGADSKILLYCN).

Belongs to the WD repeat BOP1/ERB1 family.

The protein localises to the nucleus. The protein resides in the nucleolus. It localises to the nucleoplasm. Functionally, required for maturation of ribosomal RNAs and formation of the large ribosomal subunit. In Chlamydomonas reinhardtii (Chlamydomonas smithii), this protein is Ribosome biogenesis protein BOP1 homolog.